Consider the following 233-residue polypeptide: 2-C-methyl-D-erythritol 4-phosphate cytidylyltransferase (233 aa).

This sequence belongs to the IspD/TarI cytidylyltransferase family. IspD subfamily.

It catalyses the reaction 2-C-methyl-D-erythritol 4-phosphate + CTP + H(+) = 4-CDP-2-C-methyl-D-erythritol + diphosphate. It functions in the pathway isoprenoid biosynthesis; isopentenyl diphosphate biosynthesis via DXP pathway; isopentenyl diphosphate from 1-deoxy-D-xylulose 5-phosphate: step 2/6. In terms of biological role, catalyzes the formation of 4-diphosphocytidyl-2-C-methyl-D-erythritol from CTP and 2-C-methyl-D-erythritol 4-phosphate (MEP). This is 2-C-methyl-D-erythritol 4-phosphate cytidylyltransferase from Carboxydothermus hydrogenoformans (strain ATCC BAA-161 / DSM 6008 / Z-2901).